Here is a 310-residue protein sequence, read N- to C-terminus: Homoserine kinase (310 aa).

An ATP-binding site is contributed by 91–101 (PIGSGLGSSAC).

It belongs to the GHMP kinase family. Homoserine kinase subfamily.

The protein localises to the cytoplasm. It catalyses the reaction L-homoserine + ATP = O-phospho-L-homoserine + ADP + H(+). It functions in the pathway amino-acid biosynthesis; L-threonine biosynthesis; L-threonine from L-aspartate: step 4/5. In terms of biological role, catalyzes the ATP-dependent phosphorylation of L-homoserine to L-homoserine phosphate. The sequence is that of Homoserine kinase from Escherichia coli O6:K15:H31 (strain 536 / UPEC).